A 393-amino-acid polypeptide reads, in one-letter code: Mitogen-activated protein kinase 10 (393 aa).

The Protein kinase domain maps to 60-345 (KPPIRPIGRG…VKEALAHPYL (286 aa)). ATP contacts are provided by residues 66 to 74 (IGRGACGIV) and lysine 89. Aspartate 186 acts as the Proton acceptor in catalysis. Threonine 218 carries the post-translational modification Phosphothreonine. The TXY motif lies at 218–220 (TEY). A Phosphotyrosine modification is found at tyrosine 220. Threonine 223 is subject to Phosphothreonine.

The protein belongs to the protein kinase superfamily. CMGC Ser/Thr protein kinase family. MAP kinase subfamily. As to quaternary structure, interacts with MKK2. Post-translationally, dually phosphorylated on Thr-218 and Tyr-220, which activates the enzyme.

The catalysed reaction is L-seryl-[protein] + ATP = O-phospho-L-seryl-[protein] + ADP + H(+). It carries out the reaction L-threonyl-[protein] + ATP = O-phospho-L-threonyl-[protein] + ADP + H(+). Its activity is regulated as follows. Activated by threonine and tyrosine phosphorylation. The polypeptide is Mitogen-activated protein kinase 10 (MPK10) (Arabidopsis thaliana (Mouse-ear cress)).